The following is a 493-amino-acid chain: MPERRTVALVTLGCARNEVDSEELAGRLAADGWDLVEDASDADVAVVNTCGFVEAAKKDSVDALLEANDLKDHGRTQAVVAVGCMAERYGKDLAEALPEADGVLGFDDYADISDRLQTILNGGIHASHTPRDRRKLLPISPAERQDTAVALPGHAQEAPAPAPEDLPEGVAPVSGPRAPLRRRLGTSPVASVKLASGCDRRCSFCAIPSFRGSFISRRPSDVLQETRWLAEQGVKEVMLVSENNTSYGKDLGDIRLLETLLPELADVDGIERIRVSYLQPAEMRPGLIDVLTSTPKVAPYFDLSFQHSAPGVLRAMRRFGDTDRFLELLDTIRSKAPQAGARSNFIVGFPGETEADLAELERFLTGARLDAIGVFGYSDEEGTEAVGYENKLDADTIAERLAHISQLAEELTSQRAEERVGETLQVLVESVESEEDGEVAIGRAAHQAPETDGQVVFTTREGLVPGLMVEAKAVGTEGVDLVAEHHELAEVAR.

The MTTase N-terminal domain maps to 5-121 (RTVALVTLGC…ISDRLQTILN (117 aa)). [4Fe-4S] cluster is bound by residues Cys14, Cys50, Cys84, Cys198, Cys202, and Cys205. The 232-residue stretch at 184 to 415 (LGTSPVASVK…QLAEELTSQR (232 aa)) folds into the Radical SAM core domain. The region spanning 417–487 (EERVGETLQV…GVDLVAEHHE (71 aa)) is the TRAM domain.

The protein belongs to the methylthiotransferase family. RimO subfamily. [4Fe-4S] cluster serves as cofactor.

It is found in the cytoplasm. It catalyses the reaction L-aspartate(89)-[ribosomal protein uS12]-hydrogen + (sulfur carrier)-SH + AH2 + 2 S-adenosyl-L-methionine = 3-methylsulfanyl-L-aspartate(89)-[ribosomal protein uS12]-hydrogen + (sulfur carrier)-H + 5'-deoxyadenosine + L-methionine + A + S-adenosyl-L-homocysteine + 2 H(+). Catalyzes the methylthiolation of an aspartic acid residue of ribosomal protein uS12. In Streptomyces griseus subsp. griseus (strain JCM 4626 / CBS 651.72 / NBRC 13350 / KCC S-0626 / ISP 5235), this protein is Ribosomal protein uS12 methylthiotransferase RimO.